Here is a 456-residue protein sequence, read N- to C-terminus: Sulfoacetaldehyde dehydrogenase (456 aa).

Residue 213–218 (GGTAAA) participates in NAD(+) binding. Active-site residues include E233 and C267.

It belongs to the aldehyde dehydrogenase family. Homotetramer.

It catalyses the reaction sulfoacetaldehyde + NAD(+) + H2O = sulfoacetate + NADH + 2 H(+). In terms of biological role, mediates conversion of 2-sulfoacetaldehyde into sulfoacetate. The enzyme is specific for NAD; NADP is not a substrate. Part of a pathway that can utilize the amino group of taurine as a sole source of nitrogen for growth. The protein is Sulfoacetaldehyde dehydrogenase (safD) of Neptuniibacter caesariensis.